We begin with the raw amino-acid sequence, 591 residues long: Aspartate--tRNA(Asp/Asn) ligase (591 aa).

Position 175 (Glu-175) interacts with L-aspartate. The tract at residues 199-202 (QQFK) is aspartate. 2 residues coordinate L-aspartate: Arg-221 and His-453. ATP is bound at residue 221–223 (RDE). Glu-486 contacts ATP. Arg-493 is an L-aspartate binding site. Residue 538–541 (GIDR) participates in ATP binding.

It belongs to the class-II aminoacyl-tRNA synthetase family. Type 1 subfamily. Homodimer.

Its subcellular location is the cytoplasm. The enzyme catalyses tRNA(Asx) + L-aspartate + ATP = L-aspartyl-tRNA(Asx) + AMP + diphosphate. In terms of biological role, aspartyl-tRNA synthetase with relaxed tRNA specificity since it is able to aspartylate not only its cognate tRNA(Asp) but also tRNA(Asn). Reaction proceeds in two steps: L-aspartate is first activated by ATP to form Asp-AMP and then transferred to the acceptor end of tRNA(Asp/Asn). This chain is Aspartate--tRNA(Asp/Asn) ligase, found in Jannaschia sp. (strain CCS1).